The primary structure comprises 293 residues: Nucleotide-binding protein Csac_1160 (293 aa).

Position 11 to 18 (11 to 18) interacts with ATP; the sequence is GMSGAGKS. Position 62–65 (62–65) interacts with GTP; that stretch reads DIRG.

Belongs to the RapZ-like family.

Its function is as follows. Displays ATPase and GTPase activities. In Caldicellulosiruptor saccharolyticus (strain ATCC 43494 / DSM 8903 / Tp8T 6331), this protein is Nucleotide-binding protein Csac_1160.